The following is a 423-amino-acid chain: CinA-like protein (423 aa).

Belongs to the CinA family.

In Chlorobium phaeobacteroides (strain DSM 266 / SMG 266 / 2430), this protein is CinA-like protein.